The sequence spans 229 residues: Ribonuclease 3 (229 aa).

The RNase III domain maps to Trp4–Gly133. Glu46 is a binding site for Mg(2+). The active site involves Asp50. 2 residues coordinate Mg(2+): Asp119 and Glu122. Glu122 is an active-site residue. Positions Asp159–His228 constitute a DRBM domain.

Belongs to the ribonuclease III family. Homodimer. It depends on Mg(2+) as a cofactor.

The protein resides in the cytoplasm. The enzyme catalyses Endonucleolytic cleavage to 5'-phosphomonoester.. In terms of biological role, digests double-stranded RNA. Involved in the processing of primary rRNA transcript to yield the immediate precursors to the large and small rRNAs (23S and 16S). Processes some mRNAs, and tRNAs when they are encoded in the rRNA operon. Processes pre-crRNA and tracrRNA of type II CRISPR loci if present in the organism. This Listeria innocua serovar 6a (strain ATCC BAA-680 / CLIP 11262) protein is Ribonuclease 3.